Reading from the N-terminus, the 1194-residue chain is Cohesin subunit SA-2 (1194 aa).

Residues 224-309 (FVHRYRDAIA…SRFKDRIVSM (86 aa)) enclose the SCD domain. Positions 986-1027 (DTMSVMSGMSGRGSSTRSKKIKPPTGKRKLPEAEESSSSDSM) are disordered. The span at 988 to 1001 (MSVMSGMSGRGSST) shows a compositional bias: low complexity. Residues 1002–1013 (RSKKIKPPTGKR) are compositionally biased toward basic residues.

Belongs to the SCC3 family. As to quaternary structure, part of the cohesin complex which is composed of a heterodimer between a SMC1 protein (SMC1A or SMC1B) and SMC3, which are attached via their hinge domain, and RAD21 which link them at their heads, and one STAG protein (STAG1, STAG2 or STAG3). In cohesin complexes, STAG2 is mutually exclusive with STAG1 and STAG3. Interacts directly with RAD21 in cohesin complex. In terms of processing, phosphorylated by PLK1. The large dissociation of cohesin from chromosome arms during prophase is partly due to its phosphorylation.

The protein localises to the nucleus. It localises to the chromosome. Its subcellular location is the centromere. Functionally, component of cohesin complex, a complex required for the cohesion of sister chromatids after DNA replication. The cohesin complex apparently forms a large proteinaceous ring within which sister chromatids can be trapped. At anaphase, the complex is cleaved and dissociates from chromatin, allowing sister chromatids to segregate. The cohesin complex may also play a role in spindle pole assembly during mitosis. This is Cohesin subunit SA-2 (stag2) from Xenopus laevis (African clawed frog).